The primary structure comprises 60 residues: UPF0434 protein YPA_0693 (60 aa).

This sequence belongs to the UPF0434 family.

The polypeptide is UPF0434 protein YPA_0693 (Yersinia pestis bv. Antiqua (strain Antiqua)).